The chain runs to 485 residues: Protein disulfide isomerase-like 5-4 (485 aa).

Residues 114–263 form the Thioredoxin domain; the sequence is VPTGSEFHPG…LVAAMETYVA (150 aa). Cys170 functions as the Nucleophile in the catalytic mechanism. The helical transmembrane segment at 444-464 threads the bilayer; it reads FSHFITNVCAIIGGVFTVAGI.

The protein belongs to the protein disulfide isomerase family.

The protein localises to the membrane. In terms of biological role, acts as a protein-folding catalyst that interacts with nascent polypeptides to catalyze the formation, isomerization, and reduction or oxidation of disulfide bonds. May play a role in storage protein biogenesis. The protein is Protein disulfide isomerase-like 5-4 (PDIL5-4) of Oryza sativa subsp. japonica (Rice).